A 220-amino-acid polypeptide reads, in one-letter code: Uracil-DNA glycosylase 1 (220 aa).

D65 (proton acceptor) is an active-site residue.

The protein belongs to the uracil-DNA glycosylase (UDG) superfamily. UNG family.

The protein resides in the cytoplasm. It catalyses the reaction Hydrolyzes single-stranded DNA or mismatched double-stranded DNA and polynucleotides, releasing free uracil.. Functionally, excises uracil residues from the DNA which can arise as a result of misincorporation of dUMP residues by DNA polymerase or due to deamination of cytosine. The polypeptide is Uracil-DNA glycosylase 1 (Bacteroides fragilis (strain ATCC 25285 / DSM 2151 / CCUG 4856 / JCM 11019 / LMG 10263 / NCTC 9343 / Onslow / VPI 2553 / EN-2)).